The sequence spans 59 residues: Large ribosomal subunit protein uL30 (59 aa).

This sequence belongs to the universal ribosomal protein uL30 family. In terms of assembly, part of the 50S ribosomal subunit.

This chain is Large ribosomal subunit protein uL30, found in Psychrobacter sp. (strain PRwf-1).